A 357-amino-acid polypeptide reads, in one-letter code: Glucose-6-phosphatase catalytic subunit 1 (357 aa).

Topologically, residues 1 to 28 (MEERMNVLHDFGIQSTRYLQVNYEDSQD) are lumenal. Residues 29-49 (WFVLVSVIADLRNAFYVLFPI) traverse the membrane as a helical segment. The Cytoplasmic portion of the chain corresponds to 50–60 (WFHIQETVGIN). Residues 61 to 81 (LLWVAVVGDWFNLVFKWILFG) form a helical membrane-spanning segment. Over 82 to 117 (QRPYWWVLDTDYYSNSSVPLIKQFPVTCETGPGSPS) the chain is Lumenal. Arg-83 lines the substrate pocket. An N-linked (GlcNAc...) asparagine glycan is attached at Asn-96. The chain crosses the membrane as a helical span at residues 118–138 (GHAMGTAGVYYVMVTSTLAIF). The active-site Proton donor is the His-119. The Cytoplasmic segment spans residues 139 to 147 (RGKKKSTYG). Residues 148–168 (FRCLNVVLWLGYWAVQLNVCL) traverse the membrane as a helical segment. The Lumenal segment spans residues 169–170 (SR). Residue Arg-170 coordinates substrate. A helical membrane pass occupies residues 171 to 191 (IYLAAHFPHQVVAGVLSGIAV). His-176 (nucleophile) is an active-site residue. The Cytoplasmic portion of the chain corresponds to 192-211 (AETFSHIRGIYNASLQRYCL). Residues 212-232 (ITFFLFGFALGFYLLLKGLGV) traverse the membrane as a helical segment. The Lumenal portion of the chain corresponds to 233-254 (DLLWTLEKAKRWCERPEWVHLD). The helical transmembrane segment at 255 to 275 (TTPFASLFKNLGTLLGLGLAL) threads the bilayer. The Cytoplasmic portion of the chain corresponds to 276–291 (NSSMYRKSCKGELRKS). A helical membrane pass occupies residues 292-312 (LPFRLACIVASLGLLHLFDSL). At 313–320 (KPPSQIES) the chain is on the lumenal side. Residues 321–341 (IFYILSFCKSATVPFASVSLI) traverse the membrane as a helical segment. Residues 342–357 (PYCLARLLGQTHKKSL) are Cytoplasmic-facing. Residues 354–357 (KKSL) carry the Prevents secretion from ER motif.

The protein belongs to the glucose-6-phosphatase family.

It is found in the endoplasmic reticulum membrane. It catalyses the reaction D-glucose 6-phosphate + H2O = D-glucose + phosphate. The protein operates within carbohydrate biosynthesis; gluconeogenesis. Its function is as follows. Hydrolyzes glucose-6-phosphate to glucose in the endoplasmic reticulum. Forms with the glucose-6-phosphate transporter (SLC37A4/G6PT) the complex responsible for glucose production in the terminal step of glycogenolysis and gluconeogenesis. Hence, it is the key enzyme in homeostatic regulation of blood glucose levels. This Rattus norvegicus (Rat) protein is Glucose-6-phosphatase catalytic subunit 1 (G6pc1).